The chain runs to 259 residues: Ribosomal RNA small subunit methyltransferase A (259 aa).

6 residues coordinate S-adenosyl-L-methionine: N13, L15, G40, E61, D85, and N103.

The protein belongs to the class I-like SAM-binding methyltransferase superfamily. rRNA adenine N(6)-methyltransferase family. RsmA subfamily.

It is found in the cytoplasm. It carries out the reaction adenosine(1518)/adenosine(1519) in 16S rRNA + 4 S-adenosyl-L-methionine = N(6)-dimethyladenosine(1518)/N(6)-dimethyladenosine(1519) in 16S rRNA + 4 S-adenosyl-L-homocysteine + 4 H(+). Its function is as follows. Specifically dimethylates two adjacent adenosines (A1518 and A1519) in the loop of a conserved hairpin near the 3'-end of 16S rRNA in the 30S particle. May play a critical role in biogenesis of 30S subunits. The polypeptide is Ribosomal RNA small subunit methyltransferase A (Neisseria meningitidis serogroup C / serotype 2a (strain ATCC 700532 / DSM 15464 / FAM18)).